Reading from the N-terminus, the 223-residue chain is 2-C-methyl-D-erythritol 4-phosphate cytidylyltransferase (223 aa).

This sequence belongs to the IspD/TarI cytidylyltransferase family. IspD subfamily.

It carries out the reaction 2-C-methyl-D-erythritol 4-phosphate + CTP + H(+) = 4-CDP-2-C-methyl-D-erythritol + diphosphate. It functions in the pathway isoprenoid biosynthesis; isopentenyl diphosphate biosynthesis via DXP pathway; isopentenyl diphosphate from 1-deoxy-D-xylulose 5-phosphate: step 2/6. In terms of biological role, catalyzes the formation of 4-diphosphocytidyl-2-C-methyl-D-erythritol from CTP and 2-C-methyl-D-erythritol 4-phosphate (MEP). This is 2-C-methyl-D-erythritol 4-phosphate cytidylyltransferase from Prochlorococcus marinus (strain MIT 9301).